The following is an 845-amino-acid chain: MEEKKVVRALSEHLSLPPPPSPSVAVAINGKKKSKYVVFWALEKFIPEGFTDFKLLYVRPPVSYIPTPMGIAVAVSELREDVVSAYKQELDWSANEMLRPYKKMFERRKVQVEVLLLDSLEPAAAIAEEIAGTGVTKLVIGMSLRGFFSRKIDMSSLIATAVPRFCTVYVISKGKLASVRPSESDASGSIRFERSSSTSGSTDSPRLPPEYQDFLSAVSEAQSRVSPFSPALKHSMGSNAVAQMDTSSSGTDQEEVSTGRGMEIVHSGIEGKKNKDESFSASFPMGTEAYNSMSWTSKWRDHEDRREMRSSSSSNNHDLVNMDWGAVVPENYSWVSHTASHMSDGLLSVHSITDNQVNLNFEIEKLRAELKHVQEMYAMAQTETVGASKKLTELNQRRFEESEKLVELKEKEEVAKDTASKEKQRYEEAMKEAEKVKELMMKEALHRREAEFKAERDAREKDKLQASLVSPGVQYQHYTWEEIAAATSDFAENLKIGIGAYGSVYKCNLHHTTGAVKVLHAGETQLSKQFDQELEILSKIRHPHLVLLLGACPERGCLVYEYMDNGSLDDRLMLVNDTPPIPWFERFRIALEVASALVFLHKSKPRPIIHRDLKPGNILLDHNFVSKLGDVGLSTMVNQDDVSSRTIFKQTSPVGTLCYIDPEYQRTGIISPKSDVYSLGVVILQLITAKPAIAITHMVEEAIGDDAEFMAILDKKAGSWPISDTRELAALGLCCTEMRRRDRPDLKDQIIPALERLRKVADKAQNLLSRTPSGPPSHFICPLLKGVMNEPCVAADGYTYDREAIEEWLRQKDTSPVTNLPLPNKNLIANYTLYSAIMEWKSNKR.

Disordered stretches follow at residues 180 to 210 and 229 to 258; these read RPSESDASGSIRFERSSSTSGSTDSPRLPPE and SPALKHSMGSNAVAQMDTSSSGTDQEEVST. Over residues 187 to 204 the composition is skewed to low complexity; sequence SGSIRFERSSSTSGSTDS. The span at 236–251 shows a compositional bias: polar residues; that stretch reads MGSNAVAQMDTSSSGT. Positions 351 to 468 form a coiled coil; it reads SITDNQVNLN…REKDKLQASL (118 aa). Residues 490 to 754 form the Protein kinase domain; the sequence is FAENLKIGIG…DLKDQIIPAL (265 aa). Residues 496-504 and Lys-517 contribute to the ATP site; that span reads IGIGAYGSV. Asp-612 serves as the catalytic Proton acceptor. The region spanning 774 to 845 is the U-box domain; sequence GPPSHFICPL…AIMEWKSNKR (72 aa).

This sequence belongs to the protein kinase superfamily. Ser/Thr protein kinase family.

It carries out the reaction L-seryl-[protein] + ATP = O-phospho-L-seryl-[protein] + ADP + H(+). The enzyme catalyses L-threonyl-[protein] + ATP = O-phospho-L-threonyl-[protein] + ADP + H(+). It catalyses the reaction S-ubiquitinyl-[E2 ubiquitin-conjugating enzyme]-L-cysteine + [acceptor protein]-L-lysine = [E2 ubiquitin-conjugating enzyme]-L-cysteine + N(6)-ubiquitinyl-[acceptor protein]-L-lysine.. Its pathway is protein modification; protein ubiquitination. Functions as an E3 ubiquitin ligase. This is U-box domain-containing protein 52 (PUB52) from Arabidopsis thaliana (Mouse-ear cress).